Here is a 185-residue protein sequence, read N- to C-terminus: Ribosome-recycling factor (185 aa).

It belongs to the RRF family.

It localises to the cytoplasm. Responsible for the release of ribosomes from messenger RNA at the termination of protein biosynthesis. May increase the efficiency of translation by recycling ribosomes from one round of translation to another. The sequence is that of Ribosome-recycling factor from Nitrosomonas eutropha (strain DSM 101675 / C91 / Nm57).